The sequence spans 189 residues: ATP-dependent protease subunit HslV (189 aa).

T12 is an active-site residue. Residues S172, C175, and T178 each contribute to the Na(+) site.

Belongs to the peptidase T1B family. HslV subfamily. As to quaternary structure, a double ring-shaped homohexamer of HslV is capped on each side by a ring-shaped HslU homohexamer. The assembly of the HslU/HslV complex is dependent on binding of ATP.

Its subcellular location is the cytoplasm. The enzyme catalyses ATP-dependent cleavage of peptide bonds with broad specificity.. With respect to regulation, allosterically activated by HslU binding. Protease subunit of a proteasome-like degradation complex believed to be a general protein degrading machinery. This chain is ATP-dependent protease subunit HslV, found in Ehrlichia chaffeensis (strain ATCC CRL-10679 / Arkansas).